We begin with the raw amino-acid sequence, 517 residues long: Acetyl-coenzyme A carboxylase carboxyl transferase subunit beta, chloroplastic (517 aa).

Basic and acidic residues-rich tracts occupy residues 1-17, 24-41, 48-65, and 72-81; these read MKPT…KSNE, GDNK…KSNE, and GDKQKDKKDG. 2 disordered regions span residues 1 to 179 and 204 to 234; these read MKPT…KEEE and KHRD…DSEA. The segment covering 87–131 has biased composition (acidic residues); it reads YDDEYEEDLEYDDEYEEDLEYDDEYEEDLEYDDEEYDDEYEEDLE. Composition is skewed to basic and acidic residues over residues 132 to 179 and 209 to 229; these read GDNK…KEEE and KSVP…RDTD. Residues 243-514 enclose the CoA carboxyltransferase N-terminal domain; the sequence is LWVHCKLCSG…NSQVINIYNY (272 aa). Zn(2+) contacts are provided by cysteine 247, cysteine 250, cysteine 266, and cysteine 269. The segment at 247–269 adopts a C4-type zinc-finger fold; it reads CKLCSGFNYKKILKSKNNVCEQC.

Belongs to the AccD/PCCB family. In terms of assembly, acetyl-CoA carboxylase is a heterohexamer composed of biotin carboxyl carrier protein, biotin carboxylase and 2 subunits each of ACCase subunit alpha and ACCase plastid-coded subunit beta (accD). Requires Zn(2+) as cofactor.

The protein resides in the plastid. It is found in the chloroplast stroma. The catalysed reaction is N(6)-carboxybiotinyl-L-lysyl-[protein] + acetyl-CoA = N(6)-biotinyl-L-lysyl-[protein] + malonyl-CoA. It functions in the pathway lipid metabolism; malonyl-CoA biosynthesis; malonyl-CoA from acetyl-CoA: step 1/1. Functionally, component of the acetyl coenzyme A carboxylase (ACC) complex. Biotin carboxylase (BC) catalyzes the carboxylation of biotin on its carrier protein (BCCP) and then the CO(2) group is transferred by the transcarboxylase to acetyl-CoA to form malonyl-CoA. The sequence is that of Acetyl-coenzyme A carboxylase carboxyl transferase subunit beta, chloroplastic from Oenothera elata subsp. hookeri (Hooker's evening primrose).